The primary structure comprises 156 residues: SCP2 sterol-binding domain-containing protein 1 (156 aa).

In terms of domain architecture, SCP2 spans 44 to 156 (NFSVFEDISQ…ERIFREWAKI (113 aa)).

This chain is SCP2 sterol-binding domain-containing protein 1 (Scp2d1), found in Mus musculus (Mouse).